We begin with the raw amino-acid sequence, 73 residues long: Putative antimicrobial peptide clone 5 (73 aa).

The first 22 residues, 1 to 22, serve as a signal peptide directing secretion; that stretch reads MQIKHLITLFFLVLIGADQCSA. Positions 45-73 are excised as a propeptide; that stretch reads EVSPQIDQYRNFQKREAELEELLDRLPMY.

This sequence belongs to the non-disulfide-bridged peptide (NDBP) superfamily. Short antimicrobial peptide (group 4) family. As to expression, expressed by the venom gland.

Its subcellular location is the secreted. Its function is as follows. Antibacterial peptide. This is Putative antimicrobial peptide clone 5 from Tityus costatus (Brazilian scorpion).